The following is a 295-amino-acid chain: Acetylglutamate kinase (295 aa).

Residues 66 to 67 (GG), arginine 88, and asparagine 193 contribute to the substrate site.

It belongs to the acetylglutamate kinase family. ArgB subfamily.

The protein localises to the cytoplasm. The enzyme catalyses N-acetyl-L-glutamate + ATP = N-acetyl-L-glutamyl 5-phosphate + ADP. Its pathway is amino-acid biosynthesis; L-arginine biosynthesis; N(2)-acetyl-L-ornithine from L-glutamate: step 2/4. Catalyzes the ATP-dependent phosphorylation of N-acetyl-L-glutamate. The sequence is that of Acetylglutamate kinase from Afipia carboxidovorans (strain ATCC 49405 / DSM 1227 / KCTC 32145 / OM5) (Oligotropha carboxidovorans).